A 353-amino-acid chain; its full sequence is Rhodopsin (353 aa).

The Extracellular portion of the chain corresponds to 1 to 36; sequence MNGTEGPFFYVPMLNTTGIVRSPYDYPQYYLVNPAA. N-linked (GlcNAc...) asparagine glycans are attached at residues asparagine 2 and asparagine 15. The helical transmembrane segment at 37–61 threads the bilayer; it reads YAALGAYMFLLILLGFPINFLTLYV. Residues 62-73 lie on the Cytoplasmic side of the membrane; that stretch reads TIEHKKLRTPLN. Residues 74 to 96 traverse the membrane as a helical segment; it reads YILLNLAVANLFMVFGGFTTTMY. The Extracellular portion of the chain corresponds to 97-110; sequence TSMHGYFVLGRLGC. Residues cysteine 110 and cysteine 187 are joined by a disulfide bond. The helical transmembrane segment at 111-133 threads the bilayer; sequence NLEGFFATLGGEIGLWSLVVLAI. The 'Ionic lock' involved in activated form stabilization motif lies at 134–136; sequence ERW. At 134–152 the chain is on the cytoplasmic side; sequence ERWMVVCKPISNFRFGENH. The chain crosses the membrane as a helical span at residues 153–173; it reads AIMGLAFTWIMACACAVPPLV. Residues 174–202 are Extracellular-facing; the sequence is GWSRYIPEGMQCSCGVDYYTRAEGFNNES. N-linked (GlcNAc...) asparagine glycosylation is present at asparagine 200. A helical transmembrane segment spans residues 203–224; sequence FVVYMFICHFLIPMAVVFFCYG. Residues 225–252 lie on the Cytoplasmic side of the membrane; that stretch reads RLLCAVKEAAAAQQESETTQRAEREVTR. Residues 253–274 form a helical membrane-spanning segment; that stretch reads MVVIMVVAFLICWLPYAGVAWW. At 275 to 286 the chain is on the extracellular side; the sequence is IFTHQGSEFGPV. Residues 287–308 form a helical membrane-spanning segment; that stretch reads FMTIPAFFAKSSSIYNPLIYIC. At lysine 296 the chain carries N6-(retinylidene)lysine. At 309–353 the chain is on the cytoplasmic side; sequence MNKQFRHCMITTLCCGKNPFEEEEGASTTSKTEASSVSSSSVSPA. Residues cysteine 322 and cysteine 323 are each lipidated (S-palmitoyl cysteine). A disordered region spans residues 330–353; the sequence is EEEGASTTSKTEASSVSSSSVSPA. A compositionally biased stretch (low complexity) spans 334–353; the sequence is ASTTSKTEASSVSSSSVSPA.

It belongs to the G-protein coupled receptor 1 family. Opsin subfamily. Post-translationally, phosphorylated on some or all of the serine and threonine residues present in the C-terminal region. In terms of processing, contains one covalently linked retinal chromophore.

It localises to the membrane. Its subcellular location is the cell projection. The protein resides in the cilium. The protein localises to the photoreceptor outer segment. In terms of biological role, photoreceptor required for image-forming vision at low light intensity. While most salt water fish species use retinal as chromophore, most freshwater fish use 3-dehydroretinal, or a mixture of retinal and 3-dehydroretinal. Light-induced isomerization of 11-cis to all-trans retinal triggers a conformational change that activates signaling via G-proteins. Subsequent receptor phosphorylation mediates displacement of the bound G-protein alpha subunit by arrestin and terminates signaling. The polypeptide is Rhodopsin (rho) (Tetraodon nigroviridis (Spotted green pufferfish)).